The primary structure comprises 272 residues: Arylesterase (272 aa).

Residues 21–253 (KPVLFSHGWL…LKVYKDAPHG (233 aa)) enclose the AB hydrolase-1 domain. W29 lines the acetate pocket. S95 is an active-site residue. M96 provides a ligand contact to acetate. Active-site residues include D223 and H252.

Belongs to the AB hydrolase superfamily. Bacterial non-heme haloperoxidase / perhydrolase family. As to quaternary structure, dimer of trimers.

The enzyme catalyses a phenyl acetate + H2O = a phenol + acetate + H(+). It catalyses the reaction peracetic acid + H2O = acetate + H2O2 + H(+). It carries out the reaction a percarboxylic acid + H2O = a carboxylate + H2O2 + H(+). Hydrolyzes phenolic esters, such as phenyl acetate, nitrophenyl acetate and naphtyl acetate. Can act on a wide range of esters, but reaction rate and enantioselectivity differ significantly depending on the substrate. Shows a preference for esters with small acyl groups. Also shows low perhydrolase activity, and catalyzes the reversible formation of peroxycarboxylic acids from carboxylic acids and hydrogen peroxide. In vitro, enzyme-generated peracetic acid oxidizes bromide ion to bromonium, which reacts with monochlorodimedone to form bromochlorodimedone. This Pseudomonas fluorescens protein is Arylesterase.